We begin with the raw amino-acid sequence, 406 residues long: Betaine--homocysteine S-methyltransferase 1 (406 aa).

The Hcy-binding domain occupies 11-314; that stretch reads KGILERLNAG…YHIRAIAEEL (304 aa). 3 positions are modified to N6-succinyllysine: Lys40, Lys93, and Lys98. Position 217 (Cys217) interacts with Zn(2+). N6-succinyllysine is present on residues Lys232 and Lys241. Cys299 and Cys300 together coordinate Zn(2+). Ser330 bears the Phosphoserine mark. An N6-succinyllysine mark is found at Lys340 and Lys377.

In terms of assembly, homotetramer. Zn(2+) is required as a cofactor.

The protein resides in the cytoplasm. The protein localises to the cytosol. Its subcellular location is the nucleus. It catalyses the reaction L-homocysteine + glycine betaine = N,N-dimethylglycine + L-methionine. The protein operates within amine and polyamine degradation; betaine degradation; sarcosine from betaine: step 1/2. It participates in amino-acid biosynthesis; L-methionine biosynthesis via de novo pathway; L-methionine from L-homocysteine (BhmT route): step 1/1. Involved in the regulation of homocysteine metabolism. Converts betaine and homocysteine to dimethylglycine and methionine, respectively. This reaction is also required for the irreversible oxidation of choline. This is Betaine--homocysteine S-methyltransferase 1 (BHMT) from Pongo abelii (Sumatran orangutan).